Here is a 320-residue protein sequence, read N- to C-terminus: Cytochrome f (320 aa).

Residues Met1–Ala36 form the signal peptide. Heme contacts are provided by Phe37, Cys57, Cys60, and His61. A helical membrane pass occupies residues Ile286–Leu305.

Belongs to the cytochrome f family. In terms of assembly, the 4 large subunits of the cytochrome b6-f complex are cytochrome b6, subunit IV (17 kDa polypeptide, petD), cytochrome f and the Rieske protein, while the 4 small subunits are PetG, PetL, PetM and PetN. The complex functions as a dimer. Heme serves as cofactor.

The protein localises to the plastid. Its subcellular location is the chloroplast thylakoid membrane. Functionally, component of the cytochrome b6-f complex, which mediates electron transfer between photosystem II (PSII) and photosystem I (PSI), cyclic electron flow around PSI, and state transitions. The sequence is that of Cytochrome f (petA) from Porphyra purpurea (Red seaweed).